Consider the following 363-residue polypeptide: 3-isopropylmalate dehydrogenase (363 aa).

Residue 78–91 (GPKWEHLPPAEQPE) participates in NAD(+) binding. Arg99, Arg109, Arg138, and Asp227 together coordinate substrate. Residues Asp227, Asp251, and Asp255 each contribute to the Mg(2+) site. Residue 285–297 (GSAPDIAGKDIAN) coordinates NAD(+).

The protein belongs to the isocitrate and isopropylmalate dehydrogenases family. LeuB type 1 subfamily. Homodimer. Requires Mg(2+) as cofactor. Mn(2+) serves as cofactor.

The protein localises to the cytoplasm. It catalyses the reaction (2R,3S)-3-isopropylmalate + NAD(+) = 4-methyl-2-oxopentanoate + CO2 + NADH. It participates in amino-acid biosynthesis; L-leucine biosynthesis; L-leucine from 3-methyl-2-oxobutanoate: step 3/4. Functionally, catalyzes the oxidation of 3-carboxy-2-hydroxy-4-methylpentanoate (3-isopropylmalate) to 3-carboxy-4-methyl-2-oxopentanoate. The product decarboxylates to 4-methyl-2 oxopentanoate. This chain is 3-isopropylmalate dehydrogenase, found in Pectobacterium atrosepticum (strain SCRI 1043 / ATCC BAA-672) (Erwinia carotovora subsp. atroseptica).